A 211-amino-acid chain; its full sequence is Dual specificity protein phosphatase 26 (211 aa).

The region spanning 60–207 is the Tyrosine-protein phosphatase domain; it reads NHADEVWPGL…LLALDRRLRQ (148 aa). C152 acts as the Phosphocysteine intermediate in catalysis.

Belongs to the protein-tyrosine phosphatase family. Non-receptor class dual specificity subfamily. Interacts with HSF4.

The protein resides in the cytoplasm. Its subcellular location is the nucleus. It localises to the golgi apparatus. The catalysed reaction is O-phospho-L-tyrosyl-[protein] + H2O = L-tyrosyl-[protein] + phosphate. It carries out the reaction O-phospho-L-seryl-[protein] + H2O = L-seryl-[protein] + phosphate. It catalyses the reaction O-phospho-L-threonyl-[protein] + H2O = L-threonyl-[protein] + phosphate. Its function is as follows. Inactivates MAPK1 and MAPK3 which leads to dephosphorylation of heat shock factor protein 4 and a reduction in its DNA-binding activity. The protein is Dual specificity protein phosphatase 26 (DUSP26) of Pongo abelii (Sumatran orangutan).